A 249-amino-acid polypeptide reads, in one-letter code: Chromosome segregation and cytokinesis defective protein 1 (249 aa).

Residues 12–48 (VVAMADTLETRVKDLLEEYKKKLREVALQTAKAESDR) adopt a coiled-coil conformation. Disordered stretches follow at residues 70–89 (PDDF…AAVA), 94–183 (LPSE…PEKP), and 208–249 (TTAT…GTSV). Acidic residues predominate over residues 73–85 (FYIESGEEEEEGE). Residues 109–126 (QKTSIPIGQNSGRNTVQV) are compositionally biased toward polar residues. Residues 224–236 (SGAASKKAAAAAG) show a composition bias toward low complexity.

This sequence belongs to the borealin family. Highly divergent. Component of the CPC complex which consists of icp-1; csc-1; bir-1 and air-2. Within the complex interacts with Aurora B/air-2, bir-1 and icp-1.

The protein localises to the nucleus. The protein resides in the chromosome. It is found in the centromere. Its subcellular location is the cytoplasm. It localises to the cytoskeleton. The protein localises to the spindle. In terms of biological role, component of the chromosomal passenger complex (CPC), a complex that acts as a key regulator of chromosome segregation and cytokinesis during mitosis. The CPC complex has essential functions at the centromere in ensuring correct chromosome alignment and segregation. In the complex, it may be required to direct the Aurora B/air-2 to centromeric DNA. In Caenorhabditis elegans, this protein is Chromosome segregation and cytokinesis defective protein 1 (csc-1).